The sequence spans 392 residues: LL-diaminopimelate aminotransferase (392 aa).

Y13 and G38 together coordinate substrate. Pyridoxal 5'-phosphate contacts are provided by residues Y67, S102–K103, Y127, N177, Y208, and S236–S238. Positions 103, 127, and 177 each coordinate substrate. K239 bears the N6-(pyridoxal phosphate)lysine mark. Residue R247 coordinates pyridoxal 5'-phosphate. Substrate is bound at residue R366.

This sequence belongs to the class-I pyridoxal-phosphate-dependent aminotransferase family. LL-diaminopimelate aminotransferase subfamily. In terms of assembly, homodimer. Pyridoxal 5'-phosphate is required as a cofactor.

The catalysed reaction is (2S,6S)-2,6-diaminopimelate + 2-oxoglutarate = (S)-2,3,4,5-tetrahydrodipicolinate + L-glutamate + H2O + H(+). It functions in the pathway amino-acid biosynthesis; L-lysine biosynthesis via DAP pathway; LL-2,6-diaminopimelate from (S)-tetrahydrodipicolinate (aminotransferase route): step 1/1. In terms of biological role, involved in the synthesis of meso-diaminopimelate (m-DAP or DL-DAP), required for both lysine and peptidoglycan biosynthesis. Catalyzes the direct conversion of tetrahydrodipicolinate to LL-diaminopimelate. Can also use m-DAP instead of LL-DAP as the amino-group donor. The sequence is that of LL-diaminopimelate aminotransferase from Gloeobacter violaceus (strain ATCC 29082 / PCC 7421).